Consider the following 966-residue polypeptide: Regulator of telomere elongation helicase 1 homolog (966 aa).

The region spanning 7 to 284 is the Helicase ATP-binding domain; it reads AGIPVHFPFE…QDMAGDEPKD (278 aa). Residue 42–49 participates in ATP binding; sequence SPTGTGKT. [4Fe-4S] cluster-binding residues include Cys146, Cys164, Cys173, and Cys209. The DEAH box signature appears at 233–236; it reads DEAH. The interval 844 to 864 is disordered; the sequence is VKIHKRERSSPTAPESTSQVS. Over residues 853 to 863 the composition is skewed to polar residues; it reads SPTAPESTSQV. Position 855 is a phosphothreonine (Thr855).

It belongs to the helicase family. RAD3/XPD subfamily.

The protein resides in the nucleus. The catalysed reaction is ATP + H2O = ADP + phosphate + H(+). In terms of biological role, a probable ATP-dependent DNA helicase implicated in DNA repair and the maintenance of genomic stability. Acts as an anti-recombinase to counteract toxic recombination and limit crossover during meiosis. Regulates meiotic recombination and crossover homeostasis by physically dissociating strand invasion events and thereby promotes noncrossover repair by meiotic synthesis dependent strand annealing (SDSA) as well as disassembly of D loop recombination intermediates. This chain is Regulator of telomere elongation helicase 1 homolog, found in Drosophila sechellia (Fruit fly).